The chain runs to 93 residues: HssA/B-like protein 26 (93 aa).

Belongs to the hssA/B family.

This Dictyostelium discoideum (Social amoeba) protein is HssA/B-like protein 26 (hssl26).